We begin with the raw amino-acid sequence, 374 residues long: Protein RecA (374 aa).

Position 66–73 (66–73 (GPESSGKT)) interacts with ATP. A disordered region spans residues 326–374 (KLGVGVHPEESATEPGADAASAAPADAAPAVPAPTTAKATKSKATAAKS). Residues 338–374 (TEPGADAASAAPADAAPAVPAPTTAKATKSKATAAKS) show a composition bias toward low complexity.

It belongs to the RecA family.

The protein localises to the cytoplasm. In terms of biological role, can catalyze the hydrolysis of ATP in the presence of single-stranded DNA, the ATP-dependent uptake of single-stranded DNA by duplex DNA, and the ATP-dependent hybridization of homologous single-stranded DNAs. It interacts with LexA causing its activation and leading to its autocatalytic cleavage. The protein is Protein RecA of Streptomyces coelicolor (strain ATCC BAA-471 / A3(2) / M145).